The following is a 506-amino-acid chain: Subtilisin-like serine protease Cur l 4.0101 (506 aa).

A signal peptide spans 1-15; sequence MKYSLIAALPALAAA. Positions 16–135 are cleaved as a propeptide — removed in mature form; the sequence is SPTFSTETIH…IERDSEVRIL (120 aa). The 92-residue stretch at 43–134 folds into the Inhibitor I9 domain; the sequence is SYMVVFKKHV…YIERDSEVRI (92 aa). The tract at residues 59 to 79 is disordered; that stretch reads HDWVQSVHSKNTQERMELRKR. The segment covering 69–79 has biased composition (basic and acidic residues); it reads NTQERMELRKR. Residues 147 to 453 form the Peptidase S8 domain; it reads PWGLARISHR…GGSSNYTDII (307 aa). Residues D183 and H215 each act as charge relay system in the active site. N-linked (GlcNAc...) asparagine glycans are attached at residues N245 and N285. The active-site Charge relay system is the S381. N448 carries an N-linked (GlcNAc...) asparagine glycan. Residues 459-506 constitute a propeptide, removed in mature form; sequence TVKKAASKEEEKESEFRITIPSLSELEDDFEKAKESAGRKAHHVGGKL.

It belongs to the peptidase S8 family.

Functionally, serine protease. The sequence is that of Subtilisin-like serine protease Cur l 4.0101 from Cochliobolus lunatus (Filamentous fungus).